The primary structure comprises 93 residues: DNA/RNA-binding protein Alba (93 aa).

Residue K11 is modified to N6-acetyllysine.

It belongs to the histone-like Alba family. In terms of processing, acetylated. Acetylation at Lys-11 decreases DNA-binding affinity.

Its subcellular location is the cytoplasm. It localises to the chromosome. Binds double-stranded DNA tightly but without sequence specificity. Involved in DNA compaction. The sequence is that of DNA/RNA-binding protein Alba from Pyrococcus furiosus (strain ATCC 43587 / DSM 3638 / JCM 8422 / Vc1).